A 333-amino-acid polypeptide reads, in one-letter code: Antimicrobial peptides (333 aa).

Residues 1–23 (MVQKGVVFGVLLILFICSTLTSA) form the signal peptide. The disordered stretch occupies residues 23 to 52 (ADSKPNPTKEEEPAKKPDEVSVKSGGPEVS). A propeptide spans 24–54 (DSKPNPTKEEEPAKKPDEVSVKSGGPEVSED) (acidic peptide 1). Positions 29 to 43 (PTKEEEPAKKPDEVS) are enriched in basic and acidic residues. At Q55 the chain carries Pyrrolidone carboxylic acid. 2 disulfides stabilise this stretch: C60–C70 and C61–C74. Residues 75–102 (ANAEEAAAAIPEASEELAQEEAPVYSED) constitute a propeptide, acidic peptide 2. Pyrrolidone carboxylic acid is present on Q103. 2 disulfide bridges follow: C108–C118 and C109–C122. Positions 123-148 (QNAEEAAAAIPEATEKAQEAPVYSED) are cleaved as a propeptide — acidic peptide 3. At Q149 the chain carries Pyrrolidone carboxylic acid. Intrachain disulfides connect C154–C164 and C155–C168. A propeptide spans 169 to 196 (QNAEEAAAAVAIPEASEKAQEGPVYSED) (acidic peptide 4). Pyrrolidone carboxylic acid is present on Q197. 2 cysteine pairs are disulfide-bonded: C202-C212 and C203-C216. Residues 217-232 (SNAADEVATPEDVEPG) constitute a propeptide, acidic peptide 5. Pyrrolidone carboxylic acid is present on Q233. 2 disulfides stabilise this stretch: C238–C248 and C239–C252. A propeptide spans 253 to 278 (HNAAEEATLKAFEEEAAREQPVYSED) (acidic peptide 6). Residue Q279 is modified to Pyrrolidone carboxylic acid. Intrachain disulfides connect C284–C294 and C285–C298. The propeptide at 299-333 (QSAEEAAAFQAGEVTASLMLIMFKACPCMGPVPSV) is acidic peptide 7.

In terms of processing, the N-terminal of all peptides are blocked. The 4 cysteine residues of all peptides are involved in intrachain disulfide bonds.

It localises to the secreted. Functionally, plays a role in the defense of the germinating seed against microorganisms, by inhibiting the growth of a range of filamentous fungi and bacteria, especially Gram-positive bacteria. Not cytotoxic for cultured human cells and are the smallest known plant-derived antimicrobial peptides. Peptide IB-AMP4 has a higher antifungal activity than IB-AMP1. This Impatiens balsamina (Balsam) protein is Antimicrobial peptides (AMP).